A 247-amino-acid polypeptide reads, in one-letter code: Probable transcriptional regulatory protein plu2109 (247 aa).

The protein belongs to the TACO1 family.

Its subcellular location is the cytoplasm. In Photorhabdus laumondii subsp. laumondii (strain DSM 15139 / CIP 105565 / TT01) (Photorhabdus luminescens subsp. laumondii), this protein is Probable transcriptional regulatory protein plu2109.